The primary structure comprises 202 residues: MENTQENPTSQNPTPADEAARQAAEAASGEPQDQARQPAAAAGEQPAQAQPAGAEAALAEAQAKLAELQESFLRAKAETENVRRRGQEDVAKAHKFAIESFAEHLLPVMDSLEAAVAHSTDDLAKVREGVELTLRQLTGALEKGKVVALNPVGEKFDPHRHQAISMVPADQEPNTVVAVLQKGYVIADRVLRPALVTVAAPK.

Residues 1-14 show a composition bias toward polar residues; the sequence is MENTQENPTSQNPT. The disordered stretch occupies residues 1–58; sequence MENTQENPTSQNPTPADEAARQAAEAASGEPQDQARQPAAAAGEQPAQAQPAGAEAAL. A compositionally biased stretch (low complexity) spans 21-58; it reads RQAAEAASGEPQDQARQPAAAAGEQPAQAQPAGAEAAL.

The protein belongs to the GrpE family. Homodimer.

The protein resides in the cytoplasm. In terms of biological role, participates actively in the response to hyperosmotic and heat shock by preventing the aggregation of stress-denatured proteins, in association with DnaK and GrpE. It is the nucleotide exchange factor for DnaK and may function as a thermosensor. Unfolded proteins bind initially to DnaJ; upon interaction with the DnaJ-bound protein, DnaK hydrolyzes its bound ATP, resulting in the formation of a stable complex. GrpE releases ADP from DnaK; ATP binding to DnaK triggers the release of the substrate protein, thus completing the reaction cycle. Several rounds of ATP-dependent interactions between DnaJ, DnaK and GrpE are required for fully efficient folding. This Paraburkholderia phymatum (strain DSM 17167 / CIP 108236 / LMG 21445 / STM815) (Burkholderia phymatum) protein is Protein GrpE.